We begin with the raw amino-acid sequence, 621 residues long: tRNA uridine 5-carboxymethylaminomethyl modification enzyme MnmG (621 aa).

11–16 (GAGHAG) serves as a coordination point for FAD. An NAD(+)-binding site is contributed by 271–285 (GPRYCPSVEDKINRF).

Belongs to the MnmG family. Homodimer. Heterotetramer of two MnmE and two MnmG subunits. The cofactor is FAD.

Its subcellular location is the cytoplasm. Functionally, NAD-binding protein involved in the addition of a carboxymethylaminomethyl (cmnm) group at the wobble position (U34) of certain tRNAs, forming tRNA-cmnm(5)s(2)U34. This Cytophaga hutchinsonii (strain ATCC 33406 / DSM 1761 / CIP 103989 / NBRC 15051 / NCIMB 9469 / D465) protein is tRNA uridine 5-carboxymethylaminomethyl modification enzyme MnmG.